Reading from the N-terminus, the 445-residue chain is KICSTOR subunit 2 (445 aa).

Belongs to the KICS2 family. In terms of assembly, part of the KICSTOR complex composed of KPTN, ITFG2, KICS2 and SZT2. SZT2 probably serves as a link between the other three proteins in the KICSTOR complex and may mediate the direct interaction with the GATOR complex via GATOR1. The KICSTOR complex interacts directly with the GATOR1 complex and most probably indirectly with the GATOR2 complex in an amino acid-independent manner.

The protein localises to the lysosome membrane. In terms of biological role, as part of the KICSTOR complex functions in the amino acid-sensing branch of the TORC1 signaling pathway. Recruits, in an amino acid-independent manner, the GATOR1 complex to the lysosomal membranes and allows its interaction with GATOR2 and the RAG GTPases. Functions upstream of the RAG GTPases and is required to negatively regulate mTORC1 signaling in absence of amino acids. In absence of the KICSTOR complex mTORC1 is constitutively localized to the lysosome and activated. The KICSTOR complex is also probably involved in the regulation of mTORC1 by glucose. This chain is KICSTOR subunit 2, found in Homo sapiens (Human).